Here is a 386-residue protein sequence, read N- to C-terminus: Ribosomal large subunit pseudouridine synthase B (386 aa).

Positions 14-75 (EKLQKVLARL…IRREEAAESV (62 aa)) constitute an S4 RNA-binding domain. D119 acts as the Nucleophile in catalysis. The tract at residues 260-386 (ALPGMTTKAR…GDGMRPGFRR (127 aa)) is disordered. 2 stretches are compositionally biased toward basic and acidic residues: residues 267–276 (KAREKAERQQ) and 284–306 (ARSE…ENAA). Residues 307–321 (RRAPASRPARGPQPS) are compositionally biased toward low complexity. Residues 335–354 (ERPRESNRKPRPSKPRDERP) are compositionally biased toward basic and acidic residues.

It belongs to the pseudouridine synthase RsuA family.

It carries out the reaction uridine(2605) in 23S rRNA = pseudouridine(2605) in 23S rRNA. Responsible for synthesis of pseudouridine from uracil-2605 in 23S ribosomal RNA. The polypeptide is Ribosomal large subunit pseudouridine synthase B (rluB) (Pseudomonas aeruginosa (strain ATCC 15692 / DSM 22644 / CIP 104116 / JCM 14847 / LMG 12228 / 1C / PRS 101 / PAO1)).